The sequence spans 485 residues: DNA polymerase subunit gamma-2 (485 aa).

Residues 28-67 (RQPEQLSKGTGSFVGPVRSQAELPRNEPREAPESGGEGSE) are disordered.

Heterotrimer composed of a catalytic subunit and a homodimer of accessory subunits (POLG:POLG2).

The protein localises to the mitochondrion. It localises to the mitochondrion matrix. Its subcellular location is the mitochondrion nucleoid. In terms of biological role, accessory subunit of DNA polymerase gamma solely responsible for replication of mitochondrial DNA (mtDNA). Acts as an allosteric regulator of the holoenzyme activities. Enhances the polymerase activity and the processivity of POLG by increasing its interactions with the DNA template. Suppresses POLG exonucleolytic proofreading especially toward homopolymeric templates bearing mismatched termini. Binds to single-stranded DNA. The sequence is that of DNA polymerase subunit gamma-2 (POLG2) from Bos taurus (Bovine).